The following is a 397-amino-acid chain: Odorant receptor 59a (397 aa).

Over 1-36 (MAEVRVDSLEFFKSHWTAWRYLGVAHFRVENWKNLY) the chain is Cytoplasmic. The helical transmembrane segment at 37–57 (VFYSIVSNLLVTLCYPVHLGI) threads the bilayer. The Extracellular segment spans residues 58–68 (SLFRNRTITED). N-linked (GlcNAc...) asparagine glycosylation is present at Asn-62. Residues 69–92 (ILNLTTFATCTACSVKCLLYAYNI) form a helical membrane-spanning segment. Residues 93 to 128 (KDVLEMERLLRLLDERVVGPEQRSIYGQVRVQLRNV) lie on the Cytoplasmic side of the membrane. Residues 129–149 (LYVFIGIYMPCALFAELSFLF) traverse the membrane as a helical segment. Topologically, residues 150–179 (KEERGLMYPAWFPFDWLHSTRNYYIANAYQ) are extracellular. A helical transmembrane segment spans residues 180 to 200 (IVGISFQLLQNYVSDCFPAVV). Over 201–274 (LCLISSHIKM…IEAFISLPML (74 aa)) the chain is Cytoplasmic. A helical membrane pass occupies residues 275-295 (IQFTVTALNVCIGLAALVFFV). The Extracellular segment spans residues 296–301 (SEPMAR). Residues 302 to 322 (MYFIFYSLAMPLQIFPSCFFG) traverse the membrane as a helical segment. The Cytoplasmic portion of the chain corresponds to 323 to 372 (TDNEYWFGRLHYAAFSCNWHTQNRSFKRKMMLFVEQSLKKSTAVAGGMMR). A helical transmembrane segment spans residues 373 to 393 (IHLDTFFSTLKGAYSLFTIII). The Extracellular portion of the chain corresponds to 394–397 (RMRK).

It belongs to the insect chemoreceptor superfamily. Heteromeric odorant receptor channel (TC 1.A.69) family. Or2a subfamily. In terms of assembly, interacts with Orco. Complexes exist early in the endomembrane system in olfactory sensory neurons (OSNs), coupling these complexes to the conserved ciliary trafficking pathway. Expressed in neurons of the third antennal segment.

The protein resides in the cell membrane. Functionally, odorant receptor which mediates acceptance or avoidance behavior, depending on its substrates. The odorant receptor repertoire encodes a large collection of odor stimuli that vary widely in identity, intensity, and duration. May form a complex with Orco to form odorant-sensing units, providing sensitive and prolonged odorant signaling and calcium permeability. Involved in the behavioral responses to ethyl acetate, anisole, hexanoic acid, and pyrazines. In Drosophila melanogaster (Fruit fly), this protein is Odorant receptor 59a (Or59a).